A 278-amino-acid chain; its full sequence is Putative transcription factor kapC (278 aa).

Positions 1–10 are enriched in pro residues; the sequence is MQPALAPAPH. A disordered region spans residues 1–121; the sequence is MQPALAPAPH…QNRAAQRAFR (121 aa). A compositionally biased stretch (polar residues) spans 56–68; sequence PTATTSPRDQNNI. Residues 103–166 enclose the bZIP domain; sequence PLSTSKRAAQ…EYVINLQSRL (64 aa). The basic motif stretch occupies residues 104-127; it reads LSTSKRAAQNRAAQRAFRQRKESY. The span at 109 to 119 shows a compositional bias: low complexity; that stretch reads RAAQNRAAQRA. A leucine-zipper region spans residues 131–162; the sequence is LEEQVKEYEVMSQEYKALQAENYQLREYVINL. The interval 173–278 is disordered; the sequence is VPELPGNIDL…PPTHGLPMVS (106 aa). Over residues 198-214 the composition is skewed to low complexity; that stretch reads PGQAGASAPPQGSPQSQ. Positions 215–226 are enriched in polar residues; that stretch reads VSIANDDMNSLN. Residues 254–269 show a composition bias toward basic and acidic residues; sequence GRGDETADPSETKTEP.

It belongs to the bZIP family.

It localises to the nucleus. Its function is as follows. Putative transcription factor. The polypeptide is Putative transcription factor kapC (kapC) (Emericella nidulans (strain FGSC A4 / ATCC 38163 / CBS 112.46 / NRRL 194 / M139) (Aspergillus nidulans)).